The sequence spans 228 residues: Ribonuclease 3 (228 aa).

One can recognise an RNase III domain in the interval 5–134; sequence RSKLEKDYGI…FLGALLLDKG (130 aa). Mg(2+) is bound at residue Glu-47. Asp-51 is a catalytic residue. 2 residues coordinate Mg(2+): Asp-120 and Glu-123. Glu-123 is an active-site residue. One can recognise a DRBM domain in the interval 160–228; that stretch reads DYKTSLQELL…AAKNALATLQ (69 aa).

This sequence belongs to the ribonuclease III family. Homodimer. Requires Mg(2+) as cofactor.

It is found in the cytoplasm. It carries out the reaction Endonucleolytic cleavage to 5'-phosphomonoester.. Digests double-stranded RNA. Involved in the processing of primary rRNA transcript to yield the immediate precursors to the large and small rRNAs (23S and 16S). Processes some mRNAs, and tRNAs when they are encoded in the rRNA operon. Processes pre-crRNA and tracrRNA of type II CRISPR loci if present in the organism. In Streptococcus agalactiae serotype III (strain NEM316), this protein is Ribonuclease 3.